We begin with the raw amino-acid sequence, 507 residues long: Cyclic GMP-AMP synthase (507 aa).

Residues methionine 1–glutamate 146 form a DNA-binding region. Residues methionine 1 to lysine 151 form a disordered region. Residues arginine 7–alanine 18 are compositionally biased toward basic residues. Basic and acidic residues predominate over residues arginine 44–arginine 57. Residues arginine 48–proline 59 are required for association with the cell membrane. At threonine 52 the chain carries Phosphothreonine. The interval arginine 119–arginine 132 is required for activation upon DNA viral infection. Positions valine 121 to alanine 131 are enriched in basic residues. The Nuclear export signal motif lies at leucine 154 to leucine 159. Residue lysine 156 is modified to N6-lactoyllysine. The interval arginine 158 to tyrosine 201 is DNA-binding. Glutamate 176 carries the post-translational modification PolyADP-ribosyl glutamic acid. A GTP-binding site is contributed by threonine 197. Serine 199 is an ATP binding site. A Phosphoserine modification is found at serine 199. Tyrosine 201 is subject to Phosphotyrosine. Mg(2+)-binding residues include glutamate 211 and aspartate 213. Residue aspartate 213 participates in 2',3'-cGAMP binding. Lysine 217 is covalently cross-linked (Glycyl lysine isopeptide (Lys-Gly) (interchain with G-Cter in SUMO)). Residue lysine 271 forms a Glycyl lysine isopeptide (Lys-Gly) (interchain with G-Cter in ubiquitin) linkage. 5-glutamyl polyglutamate is present on glutamate 272. Residues aspartate 281–serine 291 carry the Nuclear localization signal motif. Glycine 290 is a binding site for 2',3'-cGAMP. A Phosphoserine; by CDK1 and PKB modification is found at serine 291. A 5-glutamyl glutamate modification is found at glutamate 302. Aspartate 307 serves as a coordination point for GTP. Position 307 (aspartate 307) interacts with Mg(2+). Aspartate 307 is a 2',3'-cGAMP binding site. The interval glutamine 329–threonine 370 is interaction with collided ribosomes. A Glycyl lysine isopeptide (Lys-Gly) (interchain with G-Cter in SUMO); alternate cross-link involves residue lysine 335. Residue lysine 335 forms a Glycyl lysine isopeptide (Lys-Gly) (interchain with G-Cter in ubiquitin); alternate linkage. Residues lysine 350 and arginine 364–serine 366 contribute to the 2',3'-cGAMP site. Arginine 364 to glutamate 371 lines the GTP pocket. Residue glutamate 371 coordinates ATP. Lysine 372 participates in a covalent cross-link: Glycyl lysine isopeptide (Lys-Gly) (interchain with G-Cter in SUMO); alternate. Residue lysine 372 forms a Glycyl lysine isopeptide (Lys-Gly) (interchain with G-Cter in ubiquitin); alternate linkage. Lysine 372 carries the post-translational modification N6-acetyllysine. The segment at lysine 372–lysine 395 is DNA-binding. Histidine 378 provides a ligand contact to Zn(2+). Lysine 382 participates in a covalent cross-link: Glycyl lysine isopeptide (Lys-Gly) (interchain with G-Cter in SUMO). At lysine 382 the chain carries N6-acetyllysine. Residues cysteine 384, cysteine 385, and cysteine 392 each coordinate Zn(2+). S-palmitoyl cysteine attachment occurs at residues cysteine 392 and cysteine 393. Glycyl lysine isopeptide (Lys-Gly) (interchain with G-Cter in ubiquitin) cross-links involve residues lysine 399, lysine 402, lysine 409, and lysine 410. Lysine 402 contacts ATP. Position 402 is an N6-acetyllysine (lysine 402). Serine 420 carries the post-translational modification Phosphoserine. Serine 420–lysine 424 is a binding site for ATP. A lipid anchor (S-palmitoyl cysteine) is attached at cysteine 459. A Glycyl lysine isopeptide (Lys-Gly) (interchain with G-Cter in SUMO); alternate cross-link involves residue lysine 464. Lysine 464 is covalently cross-linked (Glycyl lysine isopeptide (Lys-Gly) (interchain with G-Cter in ubiquitin); alternate). Lysine 491 is modified (N6-methyllysine).

The protein belongs to the mab-21 family. In terms of assembly, monomer in the absence of DNA. Homodimer in presence of dsDNA: forms a 2:2 dimer with two enzymes binding to two DNA molecules. Interacts with nucleosomes; interaction is mainly mediated via histones H2A and H2B and inactivates the nucleotidyltransferase activity by blocking DNA-binding and subsequent activation. Interacts with PQBP1 (via WW domain). Interacts with TRIM14; this interaction recruits USP14, leading to deubiquitinate and stabilize CGAS and promote type I interferon production. Interacts with ZCCHC3; promoting sensing of dsDNA by CGAS. Interacts (when not monomethylated) with (poly-ADP-ribosylated) PARP1; interaction takes place in the nucleus and prevents the formation of the PARP1-TIMELESS complex. Interacts (when monomethylated) with SGF29; interaction with SGF29 prevents interaction with PARP1. Interacts with PCBP2; preventing the formation of liquid-like droplets in which CGAS is activated. Interacts with Irgm1; promoting CGAS degradation. Interacts with DDX41. The cofactor is Mg(2+). It depends on Mn(2+) as a cofactor. Requires Zn(2+) as cofactor. Post-translationally, the N-terminal disordered part (1-146) is phosphorylated by AURKB during the G2-M transition, blocking CGAS liquid phase separation and preventing activation. Phosphorylation at Tyr-201 by BLK promotes cytosolic retention. Localizes into the nucleus following dephosphorylation at Tyr-201. Phosphorylation at Ser-420 activates the nucleotidyltransferase activity. Dephosphorylation at Ser-420 by PPP6C impairs its ability to bind GTP, thereby inactivating it. Phosphorylation at Thr-52 and Ser-199 by PRKDC inhibits its cyclic GMP-AMP synthase activity by impairing homodimerization and activation. Phosphorylation at Ser-291 by AKT (AKT1, AKT2 or AKT3) suppresses the nucleotidyltransferase activity. Phosphorylation at Ser-291 by CDK1 during mitosis leads to its inhibition, thereby preventing CGAS activation by self-DNA during mitosis. Dephosphorylated at Ser-291 by protein phosphatase PP1 upon mitotic exit. Ubiquitinated at Lys-402 via 'Lys-48'-linked polyubiquitin chains, leading to its SQSTM1-mediated autophagic degradation. Interaction with TRIM14 promotes recruitment of USP14, leading to deubiquitinate Lys-402 and stabilize CGAS. Ubiquitinated at Lys-372 by RNF185 via 'Lys-27'-linked polyubiquitination, promoting CGAS cyclic GMP-AMP synthase activity. Monoubiquitination at Lys-335 by TRIM56 promotes oligomerization and subsequent activation. Monoubiquitination by TRIM41 promotes CGAS activation. Ubiquitination at Lys-271 and Lys-464 via 'Lys-48'-linked polyubiquitination promotes its degradation. Deubiquitination at Lys-271 by USP29 promotes its stabilization. Deubiquitinated by USP27X, promoting its stabilization. Ubiquitinated at Lys-399 via 'Lys-63'-linked polyubiquitin chains by MARCHF8, leading to the inhibition of its DNA binding ability. In cycling cells, nucleosome-bound CGAS is ubiquitinated at Lys-409 and Lys-410 via 'Lys-48'-linked polyubiquitin chains by the ECS(SPSB3) complex, leading to its degradation: ubiquitination and degradation of nuclear CGAS during G1 and G2 phases is required to promote low intranuclear CGAS abundance before the next mitotic cycle. In terms of processing, sumoylated at Lys-217 and Lys-464 by TRIM38 in uninfected cells and during the early phase of viral infection, promoting its stability by preventing ubiquitination at Lys-271 and Lys-464, and subsequent degradation. Desumoylated by SENP2 during the late phase of viral infection. Sumoylation at Lys-335, Lys-372 and Lys-382 prevents DNA-binding, oligomerization and nucleotidyltransferase activity. Desumoylation at Lys-335, Lys-372 and Lys-382 by SENP7 relieves inhibition and activates CGAS. Post-translationally, polyglutamylated by TTLL6 at Glu-272, leading to impair DNA-binding activity. Monoglutamylated at Glu-302 by TTLL4, leading to impair the nucleotidyltransferase activity. Deglutamylated by AGBL5/CCP5 and AGBL6/CCP6. Acetylation at Lys-372, Lys-382 and Lys-402 inhibits the cyclic GMP-AMP synthase activity. Deacetylated upon cytosolic DNA challenge such as viral infections. Acetylation by KAT5 increases the cyclic GMP-AMP synthase activity by promoting DNA-binding and subsequent activation. In terms of processing, proteolytically cleaved by apoptotic caspases during apoptosis, leading to its inactivation. The damage of the nucleus and the mitochondria during apoptosis leads to leakage of nuclear and mitochondrial DNA, which activate CGAS: cleavage and inactivation during apoptosis in required to prevent cytokine overproduction. Cleaved by CASP7 and CASP3 during virus-induced apoptosis, thereby inactivating it and preventing cytokine overproduction. Cleaved by CASP1 upon DNA virus infection; the cleavage impairs cGAMP production. Also cleaved by the pyroptotic CASP4 during non-canonical inflammasome activation; does not cut at the same sites than CASP1. Post-translationally, degraded via selective autophagy following interaction with Irgm1. Irgm1 promotes CGAS recruitment to autophagosome membranes, promoting its SQSTM1/p62-dependent autophagic degradation. Poly-ADP-ribosylation at Glu-176 by PARP1 impairs DNA-binding, thereby preventing the cyclic GMP-AMP synthase activity. In terms of processing, palmitoylation at Cys-459 by ZDHHC18 impairs DNA-binding, thereby preventing the cyclic GMP-AMP synthase activity. Palmitoylation at Cys-392 and Cys-393 by ZDHHC9 promotes homodimerization and cyclic GMP-AMP synthase activity. Depalmitoylation at Cys-392 and Cys-393 by LYPLAL1 impairs homodimerization and cyclic GMP-AMP synthase activity. Post-translationally, monomethylated at Lys-491 by SETD7. Monomethylation promotes interaction with SGF29, preventing interaction between PARP1 nad SGF29. Demethylation by RIOX1 promotes interaction with PARP1, followed by PARP1 inactivation. Lactylation by AARS2 prevents ability to undergo liquid-liquid phase separation (LLPS), thereby inhibiting CGAS activation.

The protein localises to the nucleus. It localises to the chromosome. The protein resides in the cell membrane. It is found in the cytoplasm. Its subcellular location is the cytosol. It carries out the reaction GTP + ATP = 2',3'-cGAMP + 2 diphosphate. The enzyme catalyses GTP + ATP = pppGp(2'-5')A + diphosphate. The catalysed reaction is pppGp(2'-5')A = 2',3'-cGAMP + diphosphate. With respect to regulation, the enzyme activity is strongly increased by double-stranded DNA (dsDNA), but not by single-stranded DNA or RNA. DNA-binding induces the formation of liquid-like droplets in which CGAS is activated. Liquid-like droplets also create a selective environment that restricts entry of negative regulators, such as TREX1 or BANF1/BAF, allowing sensing of DNA. A number of mechanisms exist to restrict its activity toward self-DNA. The nucleotidyltransferase activity is inhibited in the nucleus via its association with nucleosomes: interacts with the acidic patch of histones H2A and H2B, thereby blocking DNA-binding and subsequent activation. CGAS is also inactive when associated with mitotic chromatin. Chromatin-bound CGAS cannot be activated by exogenous DNA in mitotic cells: phosphorylation of the N-terminal disordered part by AURKB during the G2-M transition blocks CGAS liquid phase separation and activation. Activity toward self-DNA is inhibited by BANF1/BAF upon acute loss of nuclear membrane integrity: BANF1/BAF acts by outcompeting CGAS for DNA-binding, thereby preventing CGAS activation. DNA-induced activation at micronuclei is also limited by TREX1, which degrades micronuclear DNA upon nuclear envelope rupture, thereby preventing CGAS activation. CGAS can be released from nucleosomes and activated by MRE11 component of the MRN complex, which displaces CGAS from acidic-patch-mediated sequestration. Acetylation at Lys-372, Lys-382 and Lys-402 inhibits the cyclic GMP-AMP synthase activity. Acetylation by KAT5 increases the cyclic GMP-AMP synthase activity by promoting DNA-binding and subsequent activation. Phosphorylation at Ser-291 suppresses the nucleotidyltransferase activity. Phosphorylation at Ser-420 promotes the cyclic GMP-AMP synthase activity. Phosphorylation at Thr-52 and Ser-199 inhibits its cyclic GMP-AMP synthase activity. Ubiquitination at Lys-372 via 'Lys-27'-linked polyubiquitination enhances the cyclic GMP-AMP synthase activity. Monoubiquitination at Lys-335 promotes oligomerization and subsequent activation. Sumoylation at Lys-335, Lys-372 and Lys-382 prevents DNA-binding, oligomerization and nucleotidyltransferase activity. The enzyme activity is impaired by the cleavage by CASP1. In addition to DNA, also activated by collided ribosomes upon translation stress: specifically binds collided ribosomes, promoting its activation and triggering type-I interferon production. In hematopoietic stem cells, binding to circular RNA cia-cGAS inhibits the cyclic GMP-AMP synthase activity. Strongly inhibited by compound RU.521, which is specific for mouse protein. Nucleotidyltransferase that catalyzes the formation of cyclic GMP-AMP (2',3'-cGAMP) from ATP and GTP and plays a key role in innate immunity. Catalysis involves both the formation of a 2',5' phosphodiester linkage at the GpA step and the formation of a 3',5' phosphodiester linkage at the ApG step, producing c[G(2',5')pA(3',5')p]. Acts as a key DNA sensor: directly binds double-stranded DNA (dsDNA), inducing the formation of liquid-like droplets in which CGAS is activated, leading to synthesis of 2',3'-cGAMP, a second messenger that binds to and activates STING1, thereby triggering type-I interferon production. Preferentially binds long dsDNA (around 45 bp) and forms ladder-like networks that function cooperatively to stabilize individual cGAS-dsDNA complexes. Acts as a key foreign DNA sensor, the presence of double-stranded DNA (dsDNA) in the cytoplasm being a danger signal that triggers the immune responses. Has antiviral activity by sensing the presence of dsDNA from DNA viruses in the cytoplasm. Also acts as an innate immune sensor of infection by retroviruses by detecting the presence of reverse-transcribed DNA in the cytosol. Detection of retroviral reverse-transcribed DNA in the cytosol may be indirect and be mediated via interaction with PQBP1, which directly binds reverse-transcribed retroviral DNA. Also detects the presence of DNA from bacteria. 2',3'-cGAMP can be transferred from producing cells to neighboring cells through gap junctions, leading to promote STING1 activation and convey immune response to connecting cells. 2',3'-cGAMP can also be transferred between cells by virtue of packaging within viral particles contributing to IFN-induction in newly infected cells in a cGAS-independent but STING1-dependent manner. Also senses the presence of neutrophil extracellular traps (NETs) that are translocated to the cytosol following phagocytosis, leading to synthesis of 2',3'-cGAMP. In addition to foreign DNA, can also be activated by endogenous nuclear or mitochondrial DNA. When self-DNA leaks into the cytosol during cellular stress (such as mitochondrial stress, DNA damage, mitotic arrest or senescence), or is present in form of cytosolic micronuclei, CGAS is activated leading to a state of sterile inflammation. Acts as a regulator of cellular senescence by binding to cytosolic chromatin fragments that are present in senescent cells, leading to trigger type-I interferon production via STING1 and promote cellular senescence. Also involved in the inflammatory response to genome instability and double-stranded DNA breaks: acts by localizing to micronuclei arising from genome instability. Micronuclei, which as frequently found in cancer cells, consist of chromatin surrounded by its own nuclear membrane: following breakdown of the micronuclear envelope, a process associated with chromothripsis, CGAS binds self-DNA exposed to the cytosol, leading to 2',3'-cGAMP synthesis and subsequent activation of STING1 and type-I interferon production. In a healthy cell, CGAS is however kept inactive even in cellular events that directly expose it to self-DNA, such as mitosis, when cGAS associates with chromatin directly after nuclear envelope breakdown or remains in the form of postmitotic persistent nuclear cGAS pools bound to chromatin. Nuclear CGAS is inactivated by chromatin via direct interaction with nucleosomes, which block CGAS from DNA binding and thus prevent CGAS-induced autoimmunity. Also acts as a suppressor of DNA repair in response to DNA damage: inhibits homologous recombination repair by interacting with PARP1, the CGAS-PARP1 interaction leading to impede the formation of the PARP1-TIMELESS complex. In addition to DNA, also sense translation stress: in response to translation stress, translocates to the cytosol and associates with collided ribosomes, promoting its activation and triggering type-I interferon production. The sequence is that of Cyclic GMP-AMP synthase from Mus musculus (Mouse).